Reading from the N-terminus, the 75-residue chain is Tautomerase PptA (75 aa).

Catalysis depends on proline 2, which acts as the Proton acceptor; via imino nitrogen.

This sequence belongs to the 4-oxalocrotonate tautomerase family. PptA subfamily. As to quaternary structure, homodimer.

The protein localises to the cytoplasm. In Escherichia coli O139:H28 (strain E24377A / ETEC), this protein is Tautomerase PptA.